A 299-amino-acid chain; its full sequence is Taste receptor type 2 member 1 (299 aa).

Over 1–9 (MLESHLIIY) the chain is Extracellular. The chain crosses the membrane as a helical span at residues 10–30 (FLLAVIQFLLGTFTNGIIVVV). Residues 31–55 (NGIDLIKHRKMAPLDLLLSCLAVSR) are Cytoplasmic-facing. Residues 56–76 (IFLQLFIFYINVVVIFLIEFI) traverse the membrane as a helical segment. The Extracellular portion of the chain corresponds to 77–81 (TCSAS). The chain crosses the membrane as a helical span at residues 82-102 (CAFLVFVNELELWLATWLGVF). Over 103-124 (YCAKVASVLHPLFIWLKMRISK) the chain is Cytoplasmic. The helical transmembrane segment at 125-145 (SVPWMILGSLLYVSMICIFHI) threads the bilayer. Over 146–178 (KYTGFMVPYFLRNLFFQNATIQTEVKQAIQIFS) the chain is Extracellular. Asn163 is a glycosylation site (N-linked (GlcNAc...) asparagine). A helical transmembrane segment spans residues 179 to 199 (FVAELLVPLLIFLVAVLLLIF). The Cytoplasmic segment spans residues 200–222 (SLGRHTRQMRNTVAGSRVPGRGA). The chain crosses the membrane as a helical span at residues 223–243 (HISALLSILSFLILYISHYLI). At 244–257 (KTFLSSLKFHVKRF) the chain is on the extracellular side. Residues 258-278 (VFLFCILVIGTYPSGHSLILI) form a helical membrane-spanning segment. Topologically, residues 279 to 299 (LGNPKLKQNTKKFLCHSKCCQ) are cytoplasmic.

It belongs to the G-protein coupled receptor T2R family.

Its subcellular location is the membrane. Functionally, receptor that may play a role in the perception of bitterness and is gustducin-linked. May play a role in sensing the chemical composition of the gastrointestinal content. The activity of this receptor may stimulate alpha gustducin, mediate PLC-beta-2 activation and lead to the gating of TRPM5. The polypeptide is Taste receptor type 2 member 1 (TAS2R1) (Chlorocebus aethiops (Green monkey)).